Here is a 257-residue protein sequence, read N- to C-terminus: uncharacterized protein (257 aa).

Positions 1–22 (MGYLKRFALYISVMILMFAIAG) are cleaved as a signal peptide. Cys23 carries N-palmitoyl cysteine lipidation. A lipid anchor (S-diacylglycerol cysteine) is attached at Cys23.

It belongs to the staphylococcal tandem lipoprotein family.

The protein resides in the cell membrane. This is an uncharacterized protein from Staphylococcus aureus (strain MRSA252).